The primary structure comprises 102 residues: uncharacterized protein (102 aa).

The tract at residues R77–I102 is disordered.

This is an uncharacterized protein from Microplitis demolitor (Parasitoid wasp).